Consider the following 690-residue polypeptide: eEF1A lysine and N-terminal methyltransferase (690 aa).

The segment at 427-451 (AAASSASKKKNKKKAKQPASTGAKD) is disordered. A compositionally biased stretch (basic residues) spans 433–442 (SKKKNKKKAK).

It belongs to the methyltransferase superfamily.

It carries out the reaction L-lysyl-[protein] + S-adenosyl-L-methionine = N(6)-methyl-L-lysyl-[protein] + S-adenosyl-L-homocysteine + H(+). The catalysed reaction is N(6)-methyl-L-lysyl-[protein] + S-adenosyl-L-methionine = N(6),N(6)-dimethyl-L-lysyl-[protein] + S-adenosyl-L-homocysteine + H(+). It catalyses the reaction N-terminal glycyl-L-lysyl-L-glutamyl-[protein] + 3 S-adenosyl-L-methionine = N-terminal N,N,N-trimethyl-glycyl-L-lysyl-L-glutamyl-[protein] + 3 S-adenosyl-L-homocysteine + 3 H(+). In terms of biological role, dual methyltransferase that catalyzes methylation of elongation factor 1-alpha (eef1a1 and eef1a2) at two different positions, and is therefore involved in the regulation of mRNA translation. Via its C-terminus, methylates the N-terminus of eef1a1 and eef1a2. Via its N-terminus dimethylates lysine residues of eef1a1 and eef1a2. The chain is eEF1A lysine and N-terminal methyltransferase (mettl13) from Danio rerio (Zebrafish).